Reading from the N-terminus, the 658-residue chain is ATP-dependent zinc metalloprotease FtsH 4 (658 aa).

Positions 1 to 22 (MREPTNRQGSPGPGEPRPPAQG) are disordered. Over 1-28 (MREPTNRQGSPGPGEPRPPAQGRPRFPT) the chain is Cytoplasmic. Residues 29–49 (WILWVALLALALWNVYTFFWP) traverse the membrane as a helical segment. Topologically, residues 50–149 (SSGARLNIPY…TVKIDQAGGS (100 aa)) are extracellular. The tract at residues 95–114 (QVLSPGDPVPPGTSPNEIRT) is disordered. The chain crosses the membrane as a helical span at residues 150-170 (VWPSLLATIVPLFLFIGLMVY). The Cytoplasmic segment spans residues 171 to 658 (LGRSMSRGQQ…AAPAAAADSV (488 aa)). 243-250 (GPPGTGKT) contacts ATP. Residue His464 coordinates Zn(2+). Residue Glu465 is part of the active site. Positions 468 and 540 each coordinate Zn(2+).

In the central section; belongs to the AAA ATPase family. It in the C-terminal section; belongs to the peptidase M41 family. As to quaternary structure, homohexamer. Requires Zn(2+) as cofactor.

The protein localises to the cell membrane. Functionally, acts as a processive, ATP-dependent zinc metallopeptidase for both cytoplasmic and membrane proteins. Plays a role in the quality control of integral membrane proteins. This is ATP-dependent zinc metalloprotease FtsH 4 (ftsh4) from Sphaerobacter thermophilus (strain ATCC 49802 / DSM 20745 / KCCM 41009 / NCIMB 13125 / S 6022).